Reading from the N-terminus, the 337-residue chain is ADP-ribosylation factor GTPase-activating protein AGD12 (337 aa).

The region spanning 15 to 137 (KRRIRDLLTQ…EFLKPSLRIT (123 aa)) is the Arf-GAP domain. The C4-type zinc finger occupies 30–53 (CADCGAPDPKWASANIGVFICLKC). Residues 164 to 281 (TNSSSQQPQL…AMAFGDPEMF (118 aa)) form the C2 domain. Ca(2+) is bound by residues Asp-250, Ser-253, and Asp-256.

Ca(2+) serves as cofactor. As to expression, expressed in roots, leaves, flowers and siliques. Low levels of expression in seeds and stems.

The protein localises to the golgi apparatus. It is found in the cell membrane. GTPase-activating protein (GAP) for ADP ribosylation factor (ARF). Binds phosphatidylinositol 3-monophosohate (PI-3-P) and anionic phospholipids. This Arabidopsis thaliana (Mouse-ear cress) protein is ADP-ribosylation factor GTPase-activating protein AGD12 (AGD12).